Reading from the N-terminus, the 582-residue chain is MKRSMYAGRVREEHIGTTITLKGWVSRRRDLGGLIFIDLRDREGVMQLVINPEEVSSDVMATAERLRSEYVIEVEGFVEARQQANDKLATGMVELKVSALTILNTAKTTPFEIKDDVEVSDDTRLRYRYLDLRRPEMLENFKLRAKVTHSIRNYLDDLEFIDVETPMLTKSTPEGARDYLVPSRVSQGHFYALPQSPQITKQLLMNAGFDRYYQIVKCFRDEDLRGDRQPEFTQVDLETSFLSEQEIQDIVEGMIAKVMKETKEIDVTLPFPRMSYDVAMNSYGSDKPDTRFEMLLQDLTVTVKGIDFKVFSEAPAVKAIVVKGNADRYSRKDIDKLTEFAKQFGAKGLAWVKVTDGQLAGPVAKFLTAIETELSSQLKLAENDLVLFVADTLEVANNTLGALRNRIAKDLDMIDQSQFNFLWVVDWPMFEWSEEEGRYMSAHHPFTLPTPESAHELEGDLAKVRAIAYDIVLNGYELGGGSLRINQKEMQERMFKALGFTADEANDQFGFLLEAMDYGFPPHGGLAIGLDRFVMLLAGKDNIREVIAFPKNNKASDPMTQAPSLVSENQLEELSLQIESHD.

Residue Glu-174 coordinates L-aspartate. Positions 198–201 (QITK) are aspartate. L-aspartate is bound at residue Arg-220. Residues 220-222 (RDE) and Gln-229 contribute to the ATP site. Residue His-443 participates in L-aspartate binding. ATP is bound at residue Glu-477. Arg-484 provides a ligand contact to L-aspartate. ATP is bound at residue 529 to 532 (GLDR).

Belongs to the class-II aminoacyl-tRNA synthetase family. Type 1 subfamily. As to quaternary structure, homodimer.

It is found in the cytoplasm. It catalyses the reaction tRNA(Asp) + L-aspartate + ATP = L-aspartyl-tRNA(Asp) + AMP + diphosphate. In terms of biological role, catalyzes the attachment of L-aspartate to tRNA(Asp) in a two-step reaction: L-aspartate is first activated by ATP to form Asp-AMP and then transferred to the acceptor end of tRNA(Asp). The chain is Aspartate--tRNA ligase from Streptococcus pyogenes serotype M18 (strain MGAS8232).